The chain runs to 152 residues: MAINVEPALSPHLVVDDAASAIDFYVKAFDAVELGRVPGPDGKLIHAALRINGFTVMLNDDVPQMCGGKSMTPTSLGGTPVTIHLTVTDVDAKFQRALNAGATVVTALEDQLWGDRYGVVADPFGHHWSLGQPVREVNMDEIQAAMSSQGDG.

Residues 7-133 enclose the VOC domain; the sequence is PALSPHLVVD…FGHHWSLGQP (127 aa).

This is an uncharacterized protein from Mycobacterium bovis (strain ATCC BAA-935 / AF2122/97).